Here is a 302-residue protein sequence, read N- to C-terminus: Phosphoribosylaminoimidazole-succinocarboxamide synthase (302 aa).

It belongs to the SAICAR synthetase family.

The enzyme catalyses 5-amino-1-(5-phospho-D-ribosyl)imidazole-4-carboxylate + L-aspartate + ATP = (2S)-2-[5-amino-1-(5-phospho-beta-D-ribosyl)imidazole-4-carboxamido]succinate + ADP + phosphate + 2 H(+). It participates in purine metabolism; IMP biosynthesis via de novo pathway; 5-amino-1-(5-phospho-D-ribosyl)imidazole-4-carboxamide from 5-amino-1-(5-phospho-D-ribosyl)imidazole-4-carboxylate: step 1/2. This is Phosphoribosylaminoimidazole-succinocarboxamide synthase from Cupriavidus necator (strain ATCC 17699 / DSM 428 / KCTC 22496 / NCIMB 10442 / H16 / Stanier 337) (Ralstonia eutropha).